The sequence spans 218 residues: Glycerol-3-phosphate acyltransferase (218 aa).

5 consecutive transmembrane segments (helical) span residues 10 to 30 (LTLG…FGLI), 60 to 80 (DLAA…VLLA), 88 to 108 (PAII…PVWL), 125 to 145 (SAAW…AFLF), and 165 to 185 (AFDQ…LIFI).

Belongs to the PlsY family. As to quaternary structure, probably interacts with PlsX.

It localises to the cell inner membrane. It catalyses the reaction an acyl phosphate + sn-glycerol 3-phosphate = a 1-acyl-sn-glycero-3-phosphate + phosphate. It functions in the pathway lipid metabolism; phospholipid metabolism. Catalyzes the transfer of an acyl group from acyl-phosphate (acyl-PO(4)) to glycerol-3-phosphate (G3P) to form lysophosphatidic acid (LPA). This enzyme utilizes acyl-phosphate as fatty acyl donor, but not acyl-CoA or acyl-ACP. The polypeptide is Glycerol-3-phosphate acyltransferase (Caulobacter vibrioides (strain ATCC 19089 / CIP 103742 / CB 15) (Caulobacter crescentus)).